Here is a 312-residue protein sequence, read N- to C-terminus: Aquaporin Lacbi1:391485 (312 aa).

The Cytoplasmic portion of the chain corresponds to 1-50; it reads MDDKFDDDALPNSKTTPEDYGDKLAEYDYTNTFPNTWMRLREPFREYIAE. A helical membrane pass occupies residues 51–71; the sequence is FVGVAVLIIFGVGADCQVVLS. Residues 72–89 are Extracellular-facing; that stretch reads ANTGVAPSPKGDYLSLNC. The helical transmembrane segment at 90 to 110 threads the bilayer; the sequence is GWAIGTAMGVWISGGISGGHI. Positions 111-113 match the NPA 1 motif; the sequence is NPA. Over 111-128 the chain is Cytoplasmic; it reads NPAVTLALMAWRGFPWWK. A helical transmembrane segment spans residues 129-149; sequence VPGFIFAQLLGGIVGAGLVYV. The Extracellular segment spans residues 150 to 183; the sequence is NYIHAIDIVEGGRHIRTLDTAGLFATYAADYMTN. Asn183 carries N-linked (GlcNAc...) asparagine glycosylation. The chain crosses the membrane as a helical span at residues 184–204; the sequence is VSCFFSEFLATAVLIVVIHAM. Residues 205–213 are Cytoplasmic-facing; that stretch reads NDKRNAPPP. The helical transmembrane segment at 214-234 threads the bilayer; sequence AGLAPLVLFFLILGIGASLGM. The Extracellular segment spans residues 235–267; it reads ETGYAINPARDLGPRMLTAMVGYGRQVFAFRNQ. An NPA 2 motif is present at residues 241–243; the sequence is NPA. Residues 268–288 form a helical membrane-spanning segment; that stretch reads YWIWCPVIAPFLGAQVGTIFY. Residues 289–312 lie on the Cytoplasmic side of the membrane; the sequence is DLFFYKGQDNVFGRLGSHIHISPA.

The protein belongs to the MIP/aquaporin (TC 1.A.8) family.

It localises to the membrane. The enzyme catalyses H2O(in) = H2O(out). It catalyses the reaction glycerol(in) = glycerol(out). The catalysed reaction is NH4(+)(in) = NH4(+)(out). In terms of biological role, water channel required to facilitate the transport of water across membranes. In addition to water, also shows strong glycerol and ammonium transport activities. May be involved in fungal nitrogen (ammonium) support of the plant host in symbiosis. Glycerol accumulation has never been observed in ectomycorrhizal (ECM) fungi, therefore, glycerol permeability of Lacbi1:391485 might be a relict of the affiliation of the protein to the group of aquaglyceroporins, and other osmotic active compounds (e.g. trehalose or mannitol) may have taken over glycerol function in ECM fungi. This Laccaria bicolor (strain S238N-H82 / ATCC MYA-4686) (Bicoloured deceiver) protein is Aquaporin Lacbi1:391485.